The following is a 416-amino-acid chain: Peroxisomal isocitrate dehydrogenase [NADP] (416 aa).

Residues 77–79 (TIT) and arginine 84 each bind NADP(+). Threonine 79 provides a ligand contact to substrate. Substrate contacts are provided by residues 96–102 (SPNGTIR), arginine 111, and arginine 134. Aspartate 253 is a Mn(2+) binding site. Residue lysine 261 coordinates NADP(+). Residue aspartate 276 participates in Mn(2+) binding. NADP(+) contacts are provided by residues 311–316 (GTVTRH) and asparagine 329. The Peroxisomal targeting signal motif lies at 414 to 416 (SRL).

The protein belongs to the isocitrate and isopropylmalate dehydrogenases family. The cofactor is Mg(2+). It depends on Mn(2+) as a cofactor.

It localises to the peroxisome. It catalyses the reaction D-threo-isocitrate + NADP(+) = 2-oxoglutarate + CO2 + NADPH. May be involved in response to oxidative stresses. In Arabidopsis thaliana (Mouse-ear cress), this protein is Peroxisomal isocitrate dehydrogenase [NADP] (ICDH).